Reading from the N-terminus, the 490-residue chain is MRINPTTSGSEVSTVEKKNLGRIVKIIGPVLDVAFPPGKMPNIYNALVVQGRDNEQTNVTCEVQQLLGNNRVRAVAMSDTDGLMRGMEVSDTGAPISVPVGGSTLGRIFNVLGQPVDNLGPVDTNTTSPIHRSAPAFIQLDTKLSIFETGIKVVDLLAPYRRGGKIGLFGGAGVGKTVLIMELINNIAKAHGGVSVFGGVGERTREGNDLYLEMKESGVINEENIPESKVALVYGQMNEPPGARMRVGLTALTMAEYFRDVNEQDVLLFIDNIFRFVQAGSEVSALLGRMPSAVGYQPTLSTEMGSLQERITSTKEGSITSIQAVYVPADDLTDPAPATTFAHLDATTVLSRGLAAKGIYPAVDPLDSTSTMLQPRIVGEEHYETAQRVKQTLQRYKELQDIIAILGLDELSEEDRLTVARARKIERFLSQPFFVAEVFTGSPGKYVGLAETIRGFQLILSGELDGLPEQAFYLVGNIDEATAKAMNLKT.

Position 170-177 (170-177) interacts with ATP; it reads GGAGVGKT.

It belongs to the ATPase alpha/beta chains family. As to quaternary structure, F-type ATPases have 2 components, CF(1) - the catalytic core - and CF(0) - the membrane proton channel. CF(1) has five subunits: alpha(3), beta(3), gamma(1), delta(1), epsilon(1). CF(0) has four main subunits: a(1), b(1), b'(1) and c(9-12).

It localises to the plastid. The protein resides in the chloroplast thylakoid membrane. The enzyme catalyses ATP + H2O + 4 H(+)(in) = ADP + phosphate + 5 H(+)(out). Produces ATP from ADP in the presence of a proton gradient across the membrane. The catalytic sites are hosted primarily by the beta subunits. This chain is ATP synthase subunit beta, chloroplastic, found in Ipomoea aquatica (Water spinach).